The following is an 888-amino-acid chain: Dilute domain-containing protein YPR089W (888 aa).

Residues 360–745 enclose the Dilute domain; that stretch reads DIVLQSYWLS…KKFLNNKIKD (386 aa). 3 disordered regions span residues 462–504, 805–827, and 865–888; these read KEQQ…NNSS, KQRQ…TGDE, and LNIP…QNPW. Composition is skewed to polar residues over residues 809-823 and 867-880; these read NEPQ…TSDF and IPSS…WSNN.

It is found in the golgi apparatus. The chain is Dilute domain-containing protein YPR089W from Saccharomyces cerevisiae (strain ATCC 204508 / S288c) (Baker's yeast).